The following is a 227-amino-acid chain: Uridylate kinase (227 aa).

ATP is bound at residue 6 to 10 (KVSGK). Residue glycine 43 participates in UMP binding. The ATP site is built by glycine 44 and arginine 48. UMP is bound by residues aspartate 65 and 113 to 119 (FQPGQST). ATP contacts are provided by threonine 139, asparagine 140, tyrosine 145, and aspartate 148.

This sequence belongs to the UMP kinase family. As to quaternary structure, homohexamer.

It localises to the cytoplasm. It catalyses the reaction UMP + ATP = UDP + ADP. It participates in pyrimidine metabolism; CTP biosynthesis via de novo pathway; UDP from UMP (UMPK route): step 1/1. Its activity is regulated as follows. Inhibited by UTP. Functionally, catalyzes the reversible phosphorylation of UMP to UDP. This chain is Uridylate kinase, found in Sulfolobus acidocaldarius (strain ATCC 33909 / DSM 639 / JCM 8929 / NBRC 15157 / NCIMB 11770).